The following is a 72-amino-acid chain: Translation initiation factor IF-1 (72 aa).

The S1-like domain occupies 1 to 72 (MAKEDSIEMQ…SKGRIVFRAR (72 aa)).

This sequence belongs to the IF-1 family. Component of the 30S ribosomal translation pre-initiation complex which assembles on the 30S ribosome in the order IF-2 and IF-3, IF-1 and N-formylmethionyl-tRNA(fMet); mRNA recruitment can occur at any time during PIC assembly.

It is found in the cytoplasm. One of the essential components for the initiation of protein synthesis. Stabilizes the binding of IF-2 and IF-3 on the 30S subunit to which N-formylmethionyl-tRNA(fMet) subsequently binds. Helps modulate mRNA selection, yielding the 30S pre-initiation complex (PIC). Upon addition of the 50S ribosomal subunit IF-1, IF-2 and IF-3 are released leaving the mature 70S translation initiation complex. The polypeptide is Translation initiation factor IF-1 (Psychromonas ingrahamii (strain DSM 17664 / CCUG 51855 / 37)).